We begin with the raw amino-acid sequence, 257 residues long: Imidazole glycerol phosphate synthase subunit HisF (257 aa).

Active-site residues include Asp11 and Asp130.

This sequence belongs to the HisA/HisF family. Heterodimer of HisH and HisF.

It localises to the cytoplasm. It carries out the reaction 5-[(5-phospho-1-deoxy-D-ribulos-1-ylimino)methylamino]-1-(5-phospho-beta-D-ribosyl)imidazole-4-carboxamide + L-glutamine = D-erythro-1-(imidazol-4-yl)glycerol 3-phosphate + 5-amino-1-(5-phospho-beta-D-ribosyl)imidazole-4-carboxamide + L-glutamate + H(+). Its pathway is amino-acid biosynthesis; L-histidine biosynthesis; L-histidine from 5-phospho-alpha-D-ribose 1-diphosphate: step 5/9. Its function is as follows. IGPS catalyzes the conversion of PRFAR and glutamine to IGP, AICAR and glutamate. The HisF subunit catalyzes the cyclization activity that produces IGP and AICAR from PRFAR using the ammonia provided by the HisH subunit. The protein is Imidazole glycerol phosphate synthase subunit HisF of Tolumonas auensis (strain DSM 9187 / NBRC 110442 / TA 4).